The primary structure comprises 87 residues: uncharacterized protein (87 aa).

The N-terminal stretch at 1–23 (MAVSVLRLTVVLGLLVLFLTCYA) is a signal peptide. Residues 24-44 (DDKPDKPDDKPDDSGKDPKPD) are disordered.

The protein localises to the secreted. This is an uncharacterized protein from Homo sapiens (Human).